The sequence spans 317 residues: UV DNA damage endonuclease (317 aa).

It belongs to the uve1/UvsE family.

Its function is as follows. Component in a DNA repair pathway. Removal of UV LIGHT damaged nucleotides. Recognizes pyrimidine dimers and cleave a phosphodiester bond immediately 5' to the lesion. The sequence is that of UV DNA damage endonuclease from Bacillus cereus (strain ATCC 10987 / NRS 248).